Here is a 195-residue protein sequence, read N- to C-terminus: Glycerol-3-phosphate acyltransferase (195 aa).

Helical transmembrane passes span 3–23 (IHAV…GLIL), 53–73 (AVMT…LAKI), 80–100 (FAFI…WLLF), 115–135 (LIEY…FAIF), and 147–167 (IFVA…VFIA).

This sequence belongs to the PlsY family. As to quaternary structure, probably interacts with PlsX.

Its subcellular location is the cell inner membrane. The enzyme catalyses an acyl phosphate + sn-glycerol 3-phosphate = a 1-acyl-sn-glycero-3-phosphate + phosphate. The protein operates within lipid metabolism; phospholipid metabolism. Its function is as follows. Catalyzes the transfer of an acyl group from acyl-phosphate (acyl-PO(4)) to glycerol-3-phosphate (G3P) to form lysophosphatidic acid (LPA). This enzyme utilizes acyl-phosphate as fatty acyl donor, but not acyl-CoA or acyl-ACP. This Ehrlichia chaffeensis (strain ATCC CRL-10679 / Arkansas) protein is Glycerol-3-phosphate acyltransferase.